Reading from the N-terminus, the 478-residue chain is Growth/differentiation factor 10 (478 aa).

Positions 1–33 (MARGPARTSLGPGSQQLPLLSLLLLLLLRDADG) are cleaved as a signal peptide. The disordered stretch occupies residues 34–70 (SHTAAARPPPPAAADGLAGDKNPQRSPGDVAAAQSPG). Positions 34 to 368 (SHTAAARPPP…EKTMQKARKK (335 aa)) are excised as a propeptide. 3 N-linked (GlcNAc...) asparagine glycosylation sites follow: N118, N155, and N280. Residues 267 to 345 (PFQAGDPEPG…GRKDRRKKGQ (79 aa)) form a disordered region. Over residues 291 to 301 (TQATGPLQNNE) the composition is skewed to polar residues. Positions 331–343 (LKPRPGRKDRRKK) are enriched in basic residues. 3 disulfides stabilise this stretch: C376–C443, C405–C475, and C409–C477. N469 carries an N-linked (GlcNAc...) asparagine glycan.

The protein belongs to the TGF-beta family. In terms of assembly, homodimer or heterodimer. Can form a non-covalent complex of the mature region and the pro-region.

It is found in the secreted. Growth factor involved in osteogenesis and adipogenesis. Plays an inhibitory role in the process of osteoblast differentiation via SMAD2/3 pathway. Plays an inhibitory role in the process of adipogenesis. This chain is Growth/differentiation factor 10 (GDF10), found in Bos taurus (Bovine).